The following is a 407-amino-acid chain: Serine/threonine transporter SstT (407 aa).

A run of 9 helical transmembrane segments spans residues 11–31, 43–63, 82–102, 141–161, 192–212, 216–236, 298–318, 339–359, and 363–383; these read IIHGSLVLQIIVGIALAVILA, FLGDFFVGALKAIAPILVFVL, IISLYLIGTFAAALTAVLLSF, ALMTGNYIGILAWGIGLGIAL, LGIFGLVAGTVAATGFDALAG, LLMVLVGAMLIMALVVNPLIV, MGGAAITITVLTLAAAHTLGV, ASGVAGGSLLLIPLACSLFGI, and IAMQVVAVGFIIGVVQDSAET.

Belongs to the dicarboxylate/amino acid:cation symporter (DAACS) (TC 2.A.23) family.

Its subcellular location is the cell inner membrane. It catalyses the reaction L-serine(in) + Na(+)(in) = L-serine(out) + Na(+)(out). It carries out the reaction L-threonine(in) + Na(+)(in) = L-threonine(out) + Na(+)(out). In terms of biological role, involved in the import of serine and threonine into the cell, with the concomitant import of sodium (symport system). This chain is Serine/threonine transporter SstT, found in Shewanella denitrificans (strain OS217 / ATCC BAA-1090 / DSM 15013).